Reading from the N-terminus, the 83-residue chain is Large ribosomal subunit protein bL27 (83 aa).

Belongs to the bacterial ribosomal protein bL27 family.

This chain is Large ribosomal subunit protein bL27, found in Treponema denticola (strain ATCC 35405 / DSM 14222 / CIP 103919 / JCM 8153 / KCTC 15104).